A 337-amino-acid chain; its full sequence is uncharacterized protein (337 aa).

A coiled-coil region spans residues 248 to 276 (NELKAETTIQVLREQLRQEKKLKEQVLSL). The interval 285-337 (GGRGEEFGKPDETPSSASVGDDNFPSSTNHTFEARRRPSSLSSGGALKPSKIL) is disordered. Positions 287–296 (RGEEFGKPDE) are enriched in basic and acidic residues. Residues 297 to 315 (TPSSASVGDDNFPSSTNHT) are compositionally biased toward polar residues.

This is an uncharacterized protein from Invertebrate iridescent virus 3 (IIV-3).